The chain runs to 230 residues: MSCSIFKDLPEDHPRRLIPALCRQFYHLGWVTGTGGGMSIKLNNEIYIAPSGVQKERMQPEDLFVQDIDGKDLQMPPEIRELKKSQCTPLFMLAYRHRNAGAVIHTHSQHAVMATLLWPGKTFRCTHLEMIKGVYDDADKRYLQYDEQLVVPIIENTPHERDLADSMYAAMMEHPGCSAVLVRRHGVYVWGQTWEKAKAISECYDYLFSIAVEMKKAGLDPETFEDASKA.

Cys87 contacts substrate. Residues His105 and His107 each contribute to the Zn(2+) site. Glu129 acts as the Proton donor/acceptor in catalysis. Position 185 (His185) interacts with Zn(2+).

Belongs to the aldolase class II family. MtnB subfamily. Zn(2+) serves as cofactor.

The protein resides in the cytoplasm. The catalysed reaction is 5-(methylsulfanyl)-D-ribulose 1-phosphate = 5-methylsulfanyl-2,3-dioxopentyl phosphate + H2O. The protein operates within amino-acid biosynthesis; L-methionine biosynthesis via salvage pathway; L-methionine from S-methyl-5-thio-alpha-D-ribose 1-phosphate: step 2/6. Functionally, catalyzes the dehydration of methylthioribulose-1-phosphate (MTRu-1-P) into 2,3-diketo-5-methylthiopentyl-1-phosphate (DK-MTP-1-P). The protein is Probable methylthioribulose-1-phosphate dehydratase of Drosophila pseudoobscura pseudoobscura (Fruit fly).